A 329-amino-acid chain; its full sequence is uncharacterized protein (329 aa).

The 144-residue stretch at 37 to 180 folds into the SIS domain; it reads LAEKILGHSG…AMLLFHSRGV (144 aa). 52-57 is a binding site for ATP; sequence GVGKSG. 2 CBS domains span residues 206–265 and 274–329; these read MFPK…GGEV and MTAN…AGLL.

The protein belongs to the SIS family. GutQ/KpsF subfamily.

This is an uncharacterized protein from Chlamydia pneumoniae (Chlamydophila pneumoniae).